A 1043-amino-acid polypeptide reads, in one-letter code: Protein translocase subunit SecA (1043 aa).

ATP-binding positions include Gln-143, 161-165, and Asp-665; that span reads GEGKT. A compositionally biased stretch (low complexity) spans 980–1005; the sequence is ATAAPAAETTTTAKAADAARQQPPAA. The segment at 980 to 1043 is disordered; it reads ATAAPAAETT…KYKHCHGRNA (64 aa). The segment covering 1008–1022 has biased composition (basic and acidic residues); sequence EEQKRQPVHVEKTPG. Residues Cys-1027, Cys-1029, Cys-1038, and His-1039 each coordinate Zn(2+). Positions 1033-1043 are enriched in basic residues; sequence KKYKHCHGRNA.

This sequence belongs to the SecA family. Monomer and homodimer. Part of the essential Sec protein translocation apparatus which comprises SecA, SecYEG and auxiliary proteins SecDF. Other proteins may also be involved. It depends on Zn(2+) as a cofactor.

Its subcellular location is the cell inner membrane. The protein localises to the cytoplasm. The enzyme catalyses ATP + H2O + cellular proteinSide 1 = ADP + phosphate + cellular proteinSide 2.. In terms of biological role, part of the Sec protein translocase complex. Interacts with the SecYEG preprotein conducting channel. Has a central role in coupling the hydrolysis of ATP to the transfer of proteins into and across the cell membrane, serving as an ATP-driven molecular motor driving the stepwise translocation of polypeptide chains across the membrane. The chain is Protein translocase subunit SecA from Chloroherpeton thalassium (strain ATCC 35110 / GB-78).